Consider the following 390-residue polypeptide: F-box/kelch-repeat protein At3g04660 (390 aa).

Residues 18-67 (YDPSSILPLELKIEILMKSPPKSIAKLGFVSNHWSSIIRGQVFTDLYMRR) enclose the F-box domain. Kelch repeat units lie at residues 115–161 (FSPP…FGYD) and 272–323 (MVDH…DQRV).

In terms of assembly, part of a SCF (ASK-cullin-F-box) protein ligase complex. Interacts with SKP1A/ASK1, SKP1B/ASK2, ASK11 and ASK13.

It localises to the nucleus. It participates in protein modification; protein ubiquitination. Functionally, component of SCF(ASK-cullin-F-box) E3 ubiquitin ligase complexes, which may mediate the ubiquitination and subsequent proteasomal degradation of target proteins. The chain is F-box/kelch-repeat protein At3g04660 from Arabidopsis thaliana (Mouse-ear cress).